The sequence spans 246 residues: Bromelain inhibitor (246 aa).

An N-terminal signal peptide occupies residues 1 to 19 (MNMLLLFLHEVINGERVTL). 5 disulfides stabilise this stretch: cysteine 22/cysteine 42, cysteine 25/cysteine 74, cysteine 27/cysteine 40, cysteine 49/cysteine 56, and cysteine 53/cysteine 65. Positions 31–35 (TSSSD) are excised as a propeptide. 2 consecutive propeptides follow at residues 77 to 95 (PVSS…RVTL) and 107 to 111 (TSSSD). 5 cysteine pairs are disulfide-bonded: cysteine 98/cysteine 118, cysteine 101/cysteine 150, cysteine 103/cysteine 116, cysteine 125/cysteine 132, and cysteine 129/cysteine 141. Propeptides lie at residues 153 to 171 (PVSS…RVTL) and 183 to 187 (TSSSD). 5 disulfides stabilise this stretch: cysteine 174–cysteine 194, cysteine 177–cysteine 226, cysteine 179–cysteine 192, cysteine 201–cysteine 208, and cysteine 205–cysteine 217. Positions 229-246 (PVSSWEARQKIKLLQGRE) are excised as a propeptide.

Belongs to the protease inhibitor I67 family. Each inhibitor is composed of two chains, designated A and B linked by three disulfide bonds.

In terms of biological role, weak inhibitor of cysteine proteinases. This chain is Bromelain inhibitor, found in Ananas comosus (Pineapple).